Here is a 383-residue protein sequence, read N- to C-terminus: MRGGTSALLHALTFSGAVWMCTPAEALPIQKSVQLGSFDKVVPSREVVSESLAPSFAVTETHSSVQSPSKQETQLCAISSEGKPCRNRQLHTDNGYFIGASCPKSACCSKTMCGPGGCGEFCSSNWIFCSSSLIYHPDKSYGGDCSCEKQGHRCDKNAECVENLDAGGGVHCKCKDGFVGTGLTCSEDPCSKRGNAKCGPNGTCIVVDSVSYTCTCGDGETLVNLPEGGQGCKRTGCHAFRENCSPGRCIDDASHENGYTCECPTGYSREVTSKAEESCVEGVEVTLAEKCEKEFGISASSCKCDNGYSGSASATSHHGKGESGSEGSLSEKMNIVFKCPSGYHPRYHAHTVTCEKIKHFALDGAGNHDTTTYVARRRYPASL.

An N-terminal signal peptide occupies residues 1–26 (MRGGTSALLHALTFSGAVWMCTPAEA). Residues 27–66 (LPIQKSVQLGSFDKVVPSREVVSESLAPSFAVTETHSSVQ) constitute a propeptide, required for proper sorting to micronemes. The tract at residues 67–145 (SPSKQETQLC…HPDKSYGGDC (79 aa)) is lectin-like; required for the binding of host cells. 3 required for proper sorting to micronemes regions span residues 146–189 (SCEK…SEDP), 190–236 (CSKR…KRTG), and 237–290 (CHAF…LAEK). One can recognise an EGF-like domain in the interval 186–227 (SEDPCSKRGNAKCGPNGTCIVVDSVSYTCTCGDGETLVNLPE). Disulfide bonds link Cys190–Cys204 and Cys198–Cys214. N-linked (GlcNAc...) asparagine glycosylation occurs at Asn201. The interval 294–359 (EFGISASSCK…HTVTCEKIKH (66 aa)) is involved in dimerization.

Homodimer; dimerization is likely required for host cell binding but not for trafficking to micronemes. Post-translationally, removal of the propeptide occurs in a post-medial-Golgi compartment. Removal of the propeptide is required for the host cell binding. The presence of propeptide does not affect dimerization. The presence of propeptide does not affect sorting to micronemes.

It is found in the cytoplasmic vesicle. It localises to the secretory vesicle. Its subcellular location is the microneme. The protein resides in the secreted. The protein localises to the golgi apparatus. It is found in the endoplasmic reticulum. Functionally, adhesin; can bind both the host cells and the parasites. May be involved in parasite invasion by acting as a bridge between the parasite and the host cell. Triggers innate immune responses in mouse macrophages via the TLR11/MyD88/NF-kappa-B pathway. Induces TNF/TNF-alpha secretion in mouse macrophages. Induces secretion of IL6 in mouse and human macrophages likely via different mechanisms. Up-regulates expression of NOS2/iNOS in mouse macrophages. Induces mouse macrophage polarization. This is Micronemal protein 3 from Toxoplasma gondii.